The primary structure comprises 380 residues: 3-dehydroquinate synthase (380 aa).

NAD(+)-binding positions include 118–122, 142–143, Lys-155, and Lys-164; these read GVIGD and TS. Zn(2+)-binding residues include Glu-197, His-259, and His-278.

This sequence belongs to the sugar phosphate cyclases superfamily. Dehydroquinate synthase family. Co(2+) is required as a cofactor. Requires Zn(2+) as cofactor. The cofactor is NAD(+).

Its subcellular location is the cytoplasm. It carries out the reaction 7-phospho-2-dehydro-3-deoxy-D-arabino-heptonate = 3-dehydroquinate + phosphate. It functions in the pathway metabolic intermediate biosynthesis; chorismate biosynthesis; chorismate from D-erythrose 4-phosphate and phosphoenolpyruvate: step 2/7. In terms of biological role, catalyzes the conversion of 3-deoxy-D-arabino-heptulosonate 7-phosphate (DAHP) to dehydroquinate (DHQ). The polypeptide is 3-dehydroquinate synthase (Sinorhizobium medicae (strain WSM419) (Ensifer medicae)).